A 550-amino-acid polypeptide reads, in one-letter code: MMFCVQCEQTIRTPAGNGCAYAQGMCGKTAETSDLQDVLIYALQDLSAWVLAAREHGVIDNEIDAFVPKAFFATLTNVNFDSARIVAYVNQALAHRQQLVDRLAALAVQVTGLPEATGFEPGDELLAQLAHASQTAVNRGKSEVHEDIMGLRLLCLYGLKGAAAYMEHARVLGQQDSEVAAEFHRIMSWLSTDPSELDSLFKCAMEIGLLNFRVMEMLDLGETTAFGHPEPTQVRVTPVPGKCILVSGHDMVDLKLILEQTAGTGIHVYTHGEMLPALAYPFFKQYPHLVGNYGSAWQNQQKEFANFPGAVVMTSNCIIDPNVGDYSDRIFTRSIVGWPGVTHLEGDDFSAVVAKALSLDGFKHTELEHFITIGFARNALMQAAPAVIEKVKAGEISHFFLVGGCDGDKAERAYFTEFAKAAPKDSLLLTLGCGKYKFNKLDFGNIGGIPRLLDVGQCNDAYSAIQLALALSEAFECGVNDLPLTLVLSWFEQKAIVILLTLLALGVKDIRTGPTAPAFLTPALLKVLEEQFGLKGTTTAEADLAEILAA.

[2Fe-2S] cluster is bound by residues Cys-4, Cys-7, Cys-19, and Cys-26. Hybrid [4Fe-2O-2S] cluster-binding residues include His-249, Glu-273, Cys-317, Cys-405, Cys-433, Cys-458, Glu-492, and Lys-494. A Cysteine persulfide modification is found at Cys-405.

The protein belongs to the HCP family. The cofactor is [2Fe-2S] cluster. Hybrid [4Fe-2O-2S] cluster is required as a cofactor.

The protein localises to the cytoplasm. It catalyses the reaction A + NH4(+) + H2O = hydroxylamine + AH2 + H(+). Catalyzes the reduction of hydroxylamine to form NH(3) and H(2)O. The chain is Hydroxylamine reductase from Aeromonas salmonicida (strain A449).